We begin with the raw amino-acid sequence, 10061 residues long: MDCNFFEEDGSSSMNQTNGISKENVSEKVYSEDDKNTSCYVSYSSHSDDSYLDVEYENVHKSRDIENHINDNNKNMDNYNLGYCNFNDVMIDKNIECINKKELNCLKLKKNILNRSENYNNDIVSTEYSDNHTLYKNCSGTDDKNYSNNKDDKISDDHKCDKFVDDMDNNPNNHVSNNGDPKKCENLSPDNDTSNSIHKNNNTNINEKKNGEKKFIEGHFLSVINKFKRSLKENVIGKKIWNNNNSDITTIEPHTLQNEDSITDNNKSNKKSDNNNDKKNDDDNNNNNNNNNNNNNNNNNNDNHVCTSNNQPNTINKQNNLPSHKINDQNGRTKITPQNVNQKEKEIKNVVKEKNNFNREEKDITNSDDYDENSTDESCSYNPNITSSENSEEDCYEPSSDDKPSNNTSDHININDIRNDVPSNDNASSLNVKSAENCNKEKKKKKKKKKKELNNDNKDNTLNNETMNDINMNNKNDNTCFTIQESNKNCKNENFLILGNENEMKTSRINVPKIEIIKDEEPNRFFDNNDLKNKNINDHDNDNDDIDFIKMIKDKMKKSIYNNKDNKCISKKSNINKIENPVNNNNNNNNNNNNDINIFSNLSEQNILKKESNVCESYEGRKESNNTIHKIHCSKGKKNIMNLNNSSNTSSNFLSQHTLDDINKKYNVLSDVNLLKLIAHCSKSKNGEFPSMDDKIIEDFINMKKNSIKNEIKKHIIYICAKCRLEMKLSNNPYLCFECFINEMNAHTGKTVRMANGTDFNIKDVKVINSYISKFFVEVDKLKNKFEMDDEEIMLMFSEMRKSTLWNSEKNMCKLFFDIFKNYDIIDNNSIFSSNNKTRTDFLKQNYDIKIEEWNQNEDEKRLINNIINNEILSPGYIKELLKFYNFSKMKMKPKTNEQIEEIYLKPKSKKVNHYKNIRKKKYTVHKDICKIRTVCNSTCRINSCNYCSCIFDSIKCRFILISKMKNTKKLVYEKRINNSTISVEKMHEVKEIKIEQKDIFIHDDQKNSKDVPPSYNFGNSPIPNEEKPNVNKEGNIRIRNAINIFNKNKNNNNNNNDKNDKNDKNDKNDKNDKNDGKNNNKGNDKNNNRGNDKNNDKKNNRDNDKNNDKNNDKKNNKDNNNKKKKNGKEQNEDSTESDDESSVIDDNYIDDDSCDCDSESDSIDYDTSFNSESNYDDNSFIDMSDNDNTLNYIKNYETTYNALDIFMKDIDKINKNREELNNILPIKKSLDNYVLPNIITQKVLPPVILPLNKQMTNLFYELRYRDFFHIEKIDYYKLFTMQKGISNIYMKKFLMNNEDMSFNSITNGIETYNYTNENIVINHKNNNGKIELYIPNFWRSIKSVNEIKSLTGNYYDFYYKVLVHPRGNSNDDNYMSAYLEVIKQDFYPSEWVFPNVHFQLTVHNFKNRKNSISSASCWSFTNNSLSRGWQKMISHSKINKVSGFLDESGGLLIKGKVEITFKQLWSKSVQYSPKYIWSYMPEKLYAHFQQEDPLLNFLFKKSYFKNILHKNEKHNNYNSSINDLKKNDNNKSNNYYINKNSNCDKNKNIDRMKKMSYYNMNYLYNRYTLDIYNYSLYWSPQLVKSYFGNVDHKKKCNKSLANNTNNVIQNDMNKEEKVLDIISDSYSNMHVYDLLIKRKNLNELKKFSKGGNLQNEQKGDEDVKKEDVKKENVNKEEIKNGNNNNNNDENENEVDDNTVSTTDYLTLDDRKHVLTLTNYIVPIVESFHDNDNLTILVNTLYNIDLFKIIVLKYNGNLYNRILMKYIKKKRKEKRYKLEYVMKKYGIEKHFTKNEVIQKIKEYNENKIDNYDDCIKWKNTLIQKLQIISERIKYLYTYMNDKINNMNNINYKSYFQLCNSNEIPNIQFINVIDIQKEEIIINGITRINNYINYLNVWIQNVNDCINYVTNCGYNFNYLSNLNKVKININDLNNNIVDVNNSIHNIEKEDIFKSLSYPKDHSTTFEGIHNNMSHKETSSIQNKGKEKSNNNIKSDDNNNNNDNYCVGDYLEFLEYDFIDNPDELKRIPYRYSSDFKSFHMFEYFRKNNNNVIVSLQRIFICMQLYSLVLCAKKKKDHFEKYTSDVNLNELYYNEKDNFHDNMNKFKGKNNKYNKKQEYYNQNNYDCGVKNSYSSSLSTAVETLTANGIKEAKDDDLNKSSLNKKKCHDKDNNDQPHYVSTNSSNSDDDDDDGDNNNNKNDNMDDDSYYERNSIFGDNNDDKDDDDDDSYLDNFSDSDGKKNDPSYKYDIENNEEMKFYKDLELRKKNCLYYYRNALFYNGSSMIPCEENKHFTIPLKGIDNNGANPENFDDGTENMCSFLNMFSKNDNYLNLFKPLIPNIKILLFSLNKILFNKHRCNEPIRKIHEELFKRIVCDVARDKIKLNRKIKKLKKQNNKGDIINDLINDLKELRFFEKICYELFKLKSKNYSDDEDSNNRMEESEYSENSNDLSYDEFDSKISKYPTKVGNEGKKSKDNNNNNNNNMMGDDDNKVNKNEEGNEQNESAQIKEGKEKKLRDFIQKEDIRNEDNESYEYYNDQGTENLDDMNSDEYMNNNNNNNNNNNNNIKRLDDSYNKLLKNKNINSLIYNLVSKLKMDFYKNYIICDKDIFKTIGRLCFSEIPYVLFLYMDCYKSLGRGDLVDIPLYLDVFEENEEMEDDSKGEKNLVYSIRRNNMRNKGDGSSKEKITYHLYALVISQNKNPNNNLFIPSYNKVNDMEFNIGNDCNLNSSSYLILKPQINGPWYQIYKNRITQLKQATDFNEWKCHRDFYCSCCIYVSDNYFEMQNHFFLQQFNIKDINFPLYVHTLKEFEIEEEDIFEFDRNNKNDDMYSSSVNNGLEENYVDELIYELRKFSLDKSEKKLNEQKDGNGVPKSSNDKLVSYIEEEKYSSHFKKVFEKNNLYKLVDDINEKYNVKYYGSSKTKIFSKKKNVPMNIKEGTFPYIKTEHDIIYNCLQAHHRLMINVKEELIDDVIKVNNNNNICYNFNNHHKSAVCIVLNNHNTLREDKRRHFFDLKNIIKNYEKFDMNNLNIYNSNIKLMKFSDNFSTGLIITKNMPLFYSNITLKNIINVRNNSIIDSDNERKHLIHKIGEDHHHNNNSNNNVEGNISKVYCKKELKGIISSNETNDTNHTNRTNRTNEMKEENGLSDIRNYEQNDNITTTNTNDKKLDVVDNISETNDLNLIRKNGDINKCIEKGNGGGKGRLNVMNNNIQKCKNKYNTKKECRNLNILHCNTNNIIINRNDMNYVKYIMQLENFLKGMNFNNKFFFNMNNVKDPIRDPFHLEINNVFYNFFEVKMNMNNIKKNYINNQEKSELHSYYIKTCLNIFKSFFHEYFYLSFINKMEIKKKKKNAFKNFCIALSDIFFTNLSFKSEEDDDNFEHLQGGIIIYEFYEKRFKKLKLILKKIFMYLNIICMIIKYIKLKKWIFNENFDMHTCKMHDTFFFNFLYFFYNKYSKNCKNNYIKKLCQKSAVKKKQIINGIKKNMNTVKDEDFYFLEFYDKLFVKREPLMQEHLSNKLDKLLTYCTCIISTNETQIINPKIYKKKKALFFERTQHNIDCVFRYFSSSLHDEILYLSKRRNDFNERKKYKEQDKIASEKEDQIYSIHGNNMNNQDRMYLYIEENFNSIEETNPKRMEYFLLNLLKNNEKKRKTCVLCYCVRRYYMNFLNKLEKKLTHDFIEKQINFIFDNNYLEITKLYRRTKNNLLDPNCNCPSLFNYINIDTVEACIIYLLQTMWKFYISYILSIPNELEQYYENLAKKHKRKKYKNSKDEKGWNFIKFLKEEKTNNLINKYISFNDDSDVISTNDEENVDRSDDSESNDDKKYSKKKQSNLLLSNFDFVDISSIEKLTSGNSSSKNSKKNSNNESIQMDNTNNSNSNNNNKNDNNNDNNNDNNNSFCYYCADELNVKNGKILDTNKNIESNDKSYKNQNIQSNEQSVTPNRNIEENKDHEKKSNNSFYNINLDILKQDDLFYKCTNEHLGNATAVLNILQKKLENEELKKLMKLFHFRGFTEKIPNEECSKKKCIKNKNVHKNKDDVIVSAHKEKNVKTDSSDDKKKKEDNENNNKNKNNIIHNSTNNNVLKENIHNITQNEYIKNDLKNILSKDNLRNEDPSDILENNLESVFNGTHVDQKFISNFYANLKIFKDCLDKNELTKGNNSKDNNNNNNNNNNNNNNKNNMGQENVLMSTIHKVNETMKKYNINNINEIKSVLIKNGYDIRKCYNGIDLIFLFLSKIKGANVNFINGNNFESNKNMYEILLSNFKSLNYEKIEKEYYSLDYILGNFEYIDENYIEERYASFFNYMDVIFTTQNMIDDSDIITQDIFNPFIDIMNNLFCYGIGLIDNNNNMNSSSNNNNKINSNNSHSNNKNNNNKNKNNNNSNNNNNNNNSNNNSNNNNSNNNNNNNNNNNNNNNNVNKEIIKLNSLYSFLDNLHKCVGSLLIIDKSYDCKKELFSFIQYNSFFWYILYKQYNMFLTYYDMTNHCNFFNIFLFHFFNYTFNFPMDNFFQLDNKLSFEKEQIVNHLFTKFPFLKEEEKSLFHIIMRFLLQEKNHFYNYYYSNELSLFIFNAIMSLNNFYLNMKEPNIFSKDYTKLNDYNFVLNMKEVYDIQPAVINKKSKCEESSNKIYNVCKSSNNNEEIKSVENDKNGGNSYFDNFILNKENILDILEKKNEKEIYEIGKVFDFHIKNESIYFKKRINMLDFVMNDYKKENFVNYSNSDINNKIFYVAYNYPIININNKNNDLFSIYLRTIYKCNEHFRNLNHVFFIYSNYFYNFHNLFLFFNKDNDLFNSLFKLRFKIDQAKQMDNFYYDMEDKNNNTYMNKEYVQIKKKNENENNITFSNPIGNYKNYEYAIHNSKSDIFYIFDDIVYDITESVNMDYYFKGNRAYVNFVKNKMYGDDNKEDDYIQYDEISINEANQNKRKQQIDSSNNNNNVVVNNDDNDNDNMCSNNNYYYNNIYNNDNLCYNRNSIQFDDYMDETILSELINNKETDGLNADSSNLGPYNMNNVKNKNNNNNNSNNKRKKNEKNEKIDKIEQFLHESELEKDIMNITFNEKEFLGKDLSFNFYFRSIMYYNKDIIASNNLEYLMKDKNFITGNVGKKYFFISLLFNIDYYNVRGMNIGNKVVSNRTMFINKILRDNKGKVLNLKVFHIYNIFSKIIELYYERKRKGHNMMSLKNSKIASTNGNNNNNNNNNNNNNNNNSKSNLKDEDNTINLFDYKTDEDFYYKVKMNPSYFFLLYAIKKDYDKRNKNKLIFMNVNSDLEAYIEDKKDNNIYNRFDLNILLVPISSQIVLSKFNGNLNMFNDNDYPLITFKYLTSTYELICIGIILCSSKLLLQDYILNWFFPKLKERRLVKDDVDLKIDDIYVYEESELYCLEKIRKVSCNIKKLLKKYSNTIVIQLKKTNMNNSNIDKINLKCVEYSKLNKYNFCSKCRNNYICICEKIEREQLRKKVSLIKQEEQLYRYFKIYNNNMNMNNNNSNNNNNNNNDDLLNMLNNDKEAKKILVLMEKMKDLKKAQNIKAQEKKINKNINSTNTQNVENDNNKKLESKKEKEKLLFNIYETPNFVQELEAIENSCRSSNSSMLSLSSDNISSYSSDDNLFVDEIDSGSYTFNNIVIPNMVSVKDEENETQEKTNSSDLKKSQKVNIIKKGNGVKNDMEDIMLKEFHKLSKQRISNIYNLQQSVQLSQENVNNNNMVLNFIKAQENMKNKNMIKDAKKDSKKIPVDVLKDKKGKTSNKEELEKEKEKEEHKLKEQQTVQEDQKVKDNKKIKDNQKVKDNKKIKDNQKVKDNKKIKQDNIEKTKNDKEEPIQINENTKQSNIKIVSLTKSQESLTDNKKTNADNEKQLTVNKIVPKIENKKTEPAVDVKGKVEKSKLSKDKSVIVPEVKKEIINNSVIMNNDGSNNENKNKENKNKSSEKSKAKDNNNNKKDNNNNNNNKKDNNNNNNKKDNNNSNNNNNNNNLSNNGEEDPNDSDSDKDKKKKNKKKDNKNINDDSDDNNKNKKKLKNNIKNSDDIINNYFSKNVIEYIEKNDKLENIATYIYNELIEITKKKIKKNVIRLDNLSADNYLTIGEEFLNVMKEILLKIYYKYNEDDYRKHYLRMNNNENDNNNNNKISLKKKSETEASNKNVESNDNVDGKLENEYNEDETYMNKFNLCDDEHVIKFLNLIKRKLIYKILFPDIQIDTKSKGRNKKNVKKKKQVDIKYVYDIFKREYIFYDKILIMIQHILDINIRTNIFLFVYLFAGKLISFVDFDYILNNTIFYNDYVYYNKVAFEDTFFQEESLEESNKKYYNMNDSINMPLPDSPTTTSNSNNNNNNNNSNNNNNNNNYDKGEVKGLRTSSEQLLNSLNNEGNNNKLKEDNVMINEENNVNEDIEKKKKKKSIEEEGSGDDVLINVNMSKIIYILILISNKRIMKELIEEKYREELNEYYYFEMNKKYYDILCNEYNKILNENYAKDLSEHYVKDELFFESLNIIELLNNKEYISTLTDTNKYIKDENKKLNKTHVDDNELIINEYEFMNEKNINKYINIHNIIKFKLNFKIAIKKINILQDKIFINNNDNISSGISFYSLIFKYNSNLINTLHTDIMKTTQNNNMSIPNMTNYNNYLQVSKKDIDKLKGIYNKYVVLNNKPNVLKDMYILNSEINTLLSVLYNDINYNNMMNNTYNNILGDTHISAQNGGYLRAGSNNLSNNKMNNQGGNHINVKRVLTNNLNMNNMNNNNNNNNNNNNNNNNNNNNNNNNNNNNNNNNNNNNIYINEGGTINMKDLKLNLSKVIGTNPDIQNEINNNSNHDKKSILKNSSTYSSIYDNNTPTIINKNNNNLKTSVGLNSPTSNRNKKSVTTFDSKVTLSASYNSNEINNMNEDSKLRRLSDQPLSAKSSKIVTPPGNNMNNNTNNVINNTNNVPNNTNNIINNNVATNKYIKKSKFKRVYNKDIPYICNEGKTWMVIYKPAYYHCSAYTSHNRYNFLVNINKYSDYFYNILEKICMKCKIKTKFMCITCKDMENICSKCENIVSKFCKKCNLLIKKNRDVLKIINSISLNDVVFSGRVESFHLFMMKSFPHLETVKKWHKLECGLCHRIDLETSGSLIIAKTKEAREFLFDQFRKRNVYKEYILLCHGRIKKKKGFINKSIQTHEYNNFHSKSHFSLVVKTGGTDAYTEYNCVKVYKLKRKIEDIIQEVQDGKYNCNSTVKKDINKEIYCNDYYKFLNNNKKNVNIIQRYVIITNILSNHDNITKKKDTSNNLMTQEDYSSFVQRKNSHIITNYFSDSQILEDKKKIKKKISSTHNNKTLNIKGINHILHDDTHYNLNGNINSRGSYINKNDFTNNMNNNMNNMNNMNTSTLGIYTSGAPSIKKEVCHHLCFRCNSISEDYFLTDPKEIENYTKEFTLCNVKIHTGRTHQIRVHMRHIGHPLVSDKKYLNPSLSNLDKFWCFRMFLHSLILEFNNPDYYFFNLNDDMKKKKKMYSSNLYRMPDRTVKAICPLAGDLQTVLDNELEISESLEDENSYINRILKMNINDKRNEAMKNARPIIEDDKFVKHASMDSSKIIHSAREETNDKEKISTQAKIIEVGKKLTTKDEDMLHSKKTDVIQHGDEEEDDEEDDEEDDEEDEEEEEEDEDEEDVEDVEDIEDVEDVEDIEDNYVDDDQYEDNYDDDNDNDDDDEYDHDYDEHINEEEQEDDDKKNNVNINDSYEEGEEEGDGKLNTKIKKDKKSTENNISVVEEKVKSIDINKEEDFPDLLSNSKKKNHKDKRNASKNKNKNKDILKKNENNINDEKEKKSSNVITKNNKEQNEIIDNKNEHVDNKNEIIDNKNEIIVNKNEIIVNKNEIIVNKNEIIDNKNEHIDNKNLLNGSLDEYNNFKEKNLLSKENLKINDTTTITTSVEIPNDEHIKKILLKKPTNKILRKLNYDDFFTNKKKKDMNKENMKKTDEQKIKEEIKQTQDEEDTYLDLIDNEIKKRLRTNFNLLVKEAKIVINNIIRNSFVFKILFYFFKLKKTLLYLLKCFGIEQIKKEKKVYVEMNILDEFVNNMNENKENMPIDFLYELIHSITYFYKNMHVKKTRKKKEIIIYTLKKHLKNIKSNSNISKTKRSLIFQRFYNILFNLNYALNKYGLKTNENLKNQIMKKSKNVYLKITNVFTIIMNILNSKVYMKDIHIKKLMENKAVFSLNTIEQFLLLHKINNETGGEGTNNDKEKKRQTKVSNTQGYNKDNINNKEKETNKNEEQQQGEAEGKREGEGEEGEGGEEEECNYLIEQINKIFFKVDKNNEHMLNGVLLENDDDYLDEEGKVSKKKMKKKKLLNDKEHEKDNEDNDEDNDEDDDDEDDDEDDEDDDDDDDDDDDDDDDDDYDEDYDEDYDEKLVENKKNERSNIIMSKENMNKLNMQPKNTNNRSSSSNTIDMKKKIYEKNCMKEKEYRTHDLITNESIMYKNNEIYDKEKYRRNQENINHMSSNYMDKNINHHHEYDNMKKKNYSNNNIYNNNSSNKVSMDEEKRKNLDNNTYPYPMYENVKEIEKNKVQQNLFHISKENNNNNNDSTNNNSVYDYNMSNSNYGSKMGSNNINDSTNYYNMREKNIYNILCNNDSNNYVLFNSNEKYSMNNKISNSILSNMIMNKQDNNNININQNNNNNNNNNMNEGGSETLYSSFTKEIEKLKKEVRKCEESYDKEMVEIQNTKKEIKYLRENNKNDELNNIFSELNLENISKYLLSAYEKYGLNVFIKVLVYKNDLGHINDHIKKQDDVNMEFFINISVDKIFDYLLLKKNIITMVNIKKLKEKFIQGQKIYELVKNETNKMIIENIKEYNFIFILWKHNNMNDLYERKQVIFNFIIKIIDKIIPKYIINEYIIIRKNEIYEIMINSLNKKNEYEKKNKDISSSQYLEKENTYNNLYKKIKDEKRIVDNYSIEMHAEKNITNPIYMSQREDNSTPNSKKNCSNTNHIMSINHSNMNNTKNTNNHNNNNNNNNYVVNHTTHSTSFYYLHNEKPSNVNTDNQKEIKDDNVHMKFQSLPENIRIGVFKNDVNKFYEIYKMMNAGNDLNSLMYKNSGHIKNKVNNEPYSNNYKRNTFCTNDINFAASAQQSFMNKNVINSMNNNMVSSNNMISSNNIISNNNMISSNNMISSNNMINSNNMISSNNMISNNMMNNKMNSSNVQIDTEKTRTMNNLQDQFLNLQKNGSHIYLRNTKDSKNSDIFTFKNNVRSPSQHITLNEGKENGIDMKKKIEQEEDKKKIINNNNNNINSNNNINSNNNINSNNNMNDEDLIKKEINMNTNDYEENEKRSSQNKTNYFDNIINNSYINNKMNNFMIEKKEELNNDMINTFTNKREINIQTEKAKEQNIKEPYEVKETNHNKGIIHMYYDNEKDINNITSASGNRHNNIERDKNNIQTNKTSNNFVKSFKNTISEMFYKKKLNKNTEIKDEPNQNNDTMIYNNLQDMSKKVDEYNENKNYNHNIVHNNALKSNQMDNEEKKKIELPHNNNNNNNNSNERKDLLNNPMSVNMQNAQNVQNTNRSHEYLINSNISLPNFVDENTCSNLKEKQFESFEKNQMDMTNPNMMMFNIMLGNNLDGIIPNYMEEKHNKNMNKNVNNKNSVSLSSSMINNGNVINNRMHTKTINNNSNTCVPNIKYPNFFINKNNIPYTNENNKSLSESNLMNLVCELNNIEKVENLSMQNNLNNNINNKRSTLSQMNLLNMENTKGNEQHMRTDLHHNINNNIFLSNNLCDNKIVNQMFLKKYYNSNFVHYDEENEEKNKLGTIPRHNTTTTNNNNNDNNNNSNNNMHLFYNFNGNTPSDINNSYCQQKKIMSSSIIMNNKENNNLHFLNNTYDINGSYATSSIINNNMNRNNSNSVNSNYLNKTFSIMDPRNNINEYEEKQKIIINRIKQQNISNTSGNMKNSSNIRSSSNIRSSNNIKSSSNIKSSSNINANNNILYQLIDENILKNTLSNNNPFNEIKNNTQKTNMDFGLNQLSMYMQNNVTSNLKNNSITNETHNNNDNMKTNHNNNNNNNNNNNNNNNNNTSGYPINYLIFQQNQNHSDTNNNNNNNNKNNSNNNNNNIY.

3 disordered regions span residues 166-210 (DMDN…EKKN), 244-471 (NNSD…NDIN), and 1004-1170 (DDQK…DTSF). Residues 169 to 179 (NNPNNHVSNNG) are compositionally biased toward polar residues. The span at 193–205 (TSNSIHKNNNTNI) shows a compositional bias: low complexity. Residues 270–282 (KKSDNNNDKKNDD) show a composition bias toward basic and acidic residues. Over residues 285-320 (NNNNNNNNNNNNNNNNNDNHVCTSNNQPNTINKQNN) the composition is skewed to low complexity. The segment covering 328–338 (DQNGRTKITPQ) has biased composition (polar residues). Residues 338-366 (QNVNQKEKEIKNVVKEKNNFNREEKDITN) are a coiled coil. Positions 342 to 365 (QKEKEIKNVVKEKNNFNREEKDIT) are enriched in basic and acidic residues. Positions 366 to 375 (NSDDYDENST) are enriched in acidic residues. 2 stretches are compositionally biased toward polar residues: residues 376–389 (DESC…TSSE) and 421–437 (VPSN…SAEN). Positions 431 to 469 (NVKSAENCNKEKKKKKKKKKKELNNDNKDNTLNNETMND) form a coiled coil. A compositionally biased stretch (basic residues) spans 441-451 (EKKKKKKKKKK). Residues 460 to 471 (NTLNNETMNDIN) show a composition bias toward low complexity. The span at 1025–1037 (NEEKPNVNKEGNI) shows a compositional bias: basic and acidic residues. Low complexity predominate over residues 1047–1057 (NKNKNNNNNNN). Residues 1058-1132 (DKNDKNDKND…KKKKNGKEQN (75 aa)) show a composition bias toward basic and acidic residues. Residues 1133–1165 (EDSTESDDESSVIDDNYIDDDSCDCDSESDSID) show a composition bias toward acidic residues. In terms of domain architecture, MATH spans 1328–1458 (NGKIELYIPN…SGGLLIKGKV (131 aa)). Residues 1651–1698 (GGNLQNEQKGDEDVKKEDVKKENVNKEEIKNGNNNNNNDENENEVDDN) are disordered. Residues 1658–1680 (QKGDEDVKKEDVKKENVNKEEIK) show a composition bias toward basic and acidic residues. A coiled-coil region spans residues 1916 to 1948 (NYLSNLNKVKININDLNNNIVDVNNSIHNIEKE). The segment covering 1973 to 1995 (HKETSSIQNKGKEKSNNNIKSDD) has biased composition (basic and acidic residues). Disordered regions lie at residues 1973–1998 (HKET…DNNN), 2155–2245 (LNKS…PSYK), 2427–2566 (YSDD…NNIK), and 3120–3139 (SNET…NEMK). Over residues 2216-2228 (NNDDKDDDDDDSY) the composition is skewed to acidic residues. Residues 2235-2245 (SDGKKNDPSYK) are compositionally biased toward basic and acidic residues. A compositionally biased stretch (low complexity) spans 2475–2484 (NNNNNNNNMM). 2 stretches are compositionally biased toward basic and acidic residues: residues 2487–2496 (DDNKVNKNEE) and 2505–2527 (QIKE…RNED). Composition is skewed to low complexity over residues 2552 to 2564 (NNNN…NNNN) and 3121 to 3133 (NETN…NRTN). Residues 2555–2580 (NNNNNNNNNNIKRLDDSYNKLLKNKN) adopt a coiled-coil conformation. A helical transmembrane segment spans residues 3398–3418 (KLILKKIFMYLNIICMIIKYI). 3 disordered regions span residues 3802 to 3826 (STND…YSKK), 3847 to 3890 (LTSG…DNNN), and 3919 to 3953 (ESND…EKKS). Positions 3809–3822 (VDRSDDSESNDDKK) are enriched in basic and acidic residues. Low complexity predominate over residues 3851 to 3890 (NSSSKNSKKNSNNESIQMDNTNNSNSNNNNKNDNNNDNNN). Residues 3926–3941 (KNQNIQSNEQSVTPNR) show a composition bias toward polar residues. Basic and acidic residues predominate over residues 3942-3953 (NIEENKDHEKKS). A coiled-coil region spans residues 3977 to 4001 (EHLGNATAVLNILQKKLENEELKKL). Residues 4039–4065 (VSAHKEKNVKTDSSDDKKKKEDNENNN) are compositionally biased toward basic and acidic residues. 6 disordered regions span residues 4039–4074 (VSAH…IIHN), 4155–4180 (KGNN…NNMG), 4352–4414 (SNNN…NNNN), 4919–4943 (NKRK…DNDN), 4991–5030 (DGLN…KNEK), and 5179–5207 (SKIA…KSNL). Residues 4157–4178 (NNSKDNNNNNNNNNNNNNNKNN) show a composition bias toward low complexity. Positions 4399–4424 (NNNNNNNNNNNNNNNNVNKEIIKLNS) form a coiled coil. 3 stretches are compositionally biased toward low complexity: residues 4929–4943 (NNNN…DNDN), 5004–5019 (NMNN…NNSN), and 5185–5202 (NGNN…NNNN). A coiled-coil region spans residues 5006–5046 (NNVKNKNNNNNNSNNKRKKNEKNEKIDKIEQFLHESELEKD). 3 coiled-coil regions span residues 5486–5563 (NNNN…NIYE), 5728–5810 (DVLK…DKEE), and 5900–6022 (MNND…INNY). Basic and acidic residues-rich tracts occupy residues 5716–5732 (KDAK…VLKD), 5738–5811 (SNKE…KEEP), and 5909–5953 (NKNK…KKDN). Disordered stretches follow at residues 5716-5816 (KDAK…QINE), 5892-6009 (EIIN…KKLK), 6123-6142 (KSET…VDGK), 6299-6338 (NDSI…DKGE), 6722-6760 (NMNN…NNNI), 7585-7730 (EDML…VEEK), and 7744-7787 (DLLS…KKSS). The span at 5954–5968 (NNSNNNNNNNNLSNN) shows a compositional bias: low complexity. Residues 5969-5978 (GEEDPNDSDS) are compositionally biased toward acidic residues. Positions 5991 to 6003 (NKNINDDSDDNNK) are enriched in basic and acidic residues. A compositionally biased stretch (polar residues) spans 6129-6138 (SNKNVESNDN). 2 stretches are compositionally biased toward low complexity: residues 6314-6333 (SNSN…NNNN) and 6722-6759 (NMNN…NNNN). Positions 6719 to 6743 (NMNNMNNNNNNNNNNNNNNNNNNNN) form a coiled coil. Basic and acidic residues predominate over residues 7585-7599 (EDMLHSKKTDVIQHG). Residues 7600–7685 (DEEEDDEEDD…EHINEEEQED (86 aa)) are compositionally biased toward acidic residues. Coiled-coil stretches lie at residues 7601-7637 (EEED…DIED), 7710-7813 (NTKI…NKNE), 7934-7961 (KTDE…IDNE), and 8217-8241 (NINN…GKRE). A compositionally biased stretch (basic residues) spans 7749–7765 (SKKKNHKDKRNASKNKN). Positions 7766–7786 (KNKDILKKNENNINDEKEKKS) are enriched in basic and acidic residues. 3 disordered regions span residues 8189–8252 (ETGG…GGEE), 8293–8380 (GKVS…IIMS), and 8474–8497 (KKKN…MDEE). Residues 8218 to 8242 (INNKEKETNKNEEQQQGEAEGKREG) show a composition bias toward basic and acidic residues. Over residues 8243 to 8252 (EGEEGEGGEE) the composition is skewed to acidic residues. Residues 8305–8314 (LLNDKEHEKD) are compositionally biased toward basic and acidic residues. A compositionally biased stretch (acidic residues) spans 8315 to 8363 (NEDNDEDNDEDDDDEDDDEDDEDDDDDDDDDDDDDDDDDYDEDYDEDYD). Residues 8364–8374 (EKLVENKKNER) show a composition bias toward basic and acidic residues. The span at 8478-8492 (YSNNNIYNNNSSNKV) shows a compositional bias: low complexity. Coiled-coil stretches lie at residues 8644–8697 (SETL…ELNN), 8882–8907 (QYLE…VDNY), and 9219–9247 (IDMK…SNNN). 3 disordered regions span residues 9759–9779 (TIPR…NNNS), 9891–9926 (SNTS…SSSN), and 9985–10061 (KNNS…NNIY). Composition is skewed to low complexity over residues 9764 to 9779 (NTTT…NNNS), 9899 to 9926 (NSSN…SSSN), and 9986 to 10022 (NNSI…NNNT). A compositionally biased stretch (polar residues) spans 10031–10041 (IFQQNQNHSDT). Positions 10042–10061 (NNNNNNNNKNNSNNNNNNIY) are enriched in low complexity.

It is found in the membrane. The protein is MATH and LRR domain-containing protein PFE0570w of Plasmodium falciparum (isolate 3D7).